A 1449-amino-acid chain; its full sequence is ABC transporter G family member 21 (1449 aa).

A compositionally biased stretch (basic and acidic residues) spans 1 to 10 (MEEYELREIA). Residues 1-49 (MEEYELREIALQEGGSNLDINTPPNYDNPVGDGSSPPDSPDIQKSENQF) form a disordered region. Positions 14–25 (GGSNLDINTPPN) are enriched in polar residues. The ABC transporter 1 domain occupies 130 to 383 (ISFFNLFKPS…FIDLGFDCEP (254 aa)). The ABC transmembrane type-2 1 domain maps to 488 to 731 (WGDKFSLISR…ILSVEGKDYL (244 aa)). Helical transmembrane passes span 519–539 (IPGLFTRGGAIFSAILFNAFL), 577–597 (IPLTMIQVFLFSIVVYFMFGL), 602–622 (GKFFIFCFTLVGATLATTNLF), 634–654 (ISQNVMNVILIFMITYCGYTI), and 747–767 (FITYLWWVLFTAMNMFAMEYF). Residues 818–1062 (FTWQNINYTV…LTSYFERYGV (245 aa)) enclose the ABC transporter 2 domain. 854 to 861 (GSSGAGKT) lines the ATP pocket. The 235-residue stretch at 1152–1386 (FYTYGSFIQS…PISEPLTGYV (235 aa)) folds into the ABC transmembrane type-2 2 domain. Helical transmembrane passes span 1155-1175 (YGSFIQSALAGLIIGFTFWSL), 1188-1208 (FIFEALILGILLIFVVLPQFI), 1228-1248 (FAISIVVVELPFITVSGTIFF), 1266-1286 (FYFWFIFILFLYFCVSFGQAV), 1296-1316 (AHTLIPLLIVFLFLFCGVMVI), and 1423-1443 (LALIICFWIFNTLMVITFVYI).

This sequence belongs to the ABC transporter superfamily. ABCG family. PDR (TC 3.A.1.205) subfamily.

The protein resides in the membrane. In Dictyostelium discoideum (Social amoeba), this protein is ABC transporter G family member 21 (abcG21).